Reading from the N-terminus, the 79-residue chain is MAPPGHLLFLFLLPVAASQTNEGSCSGCGPLSLPLLAGLVAADAVMSLLIVGVVFVCMRLHSRPAQEDGRVYINMPGRG.

An N-terminal signal peptide occupies residues 1–18 (MAPPGHLLFLFLLPVAAS). Residues 19-35 (QTNEGSCSGCGPLSLPL) are Extracellular-facing. The chain crosses the membrane as a helical span at residues 36 to 56 (LAGLVAADAVMSLLIVGVVFV). Residues 57–79 (CMRLHSRPAQEDGRVYINMPGRG) are Cytoplasmic-facing. A Phosphotyrosine modification is found at tyrosine 72. Positions 72–74 (YIN) are GRB2 binding site. A PIK3R1 binding site region spans residues 72–75 (YINM).

It belongs to the DAP10 family. Homodimer; Disulfide-linked. Heterohexamer composed of four subunits of HCST/DAP10 and two subunits of KLRK1. Interacts (via transmembrane domain) with KLRK1 (via transmembrane domain); the interaction is required for KLRK1 NK cell surface and induces NK cell-mediated cytotoxicity. Interacts with PIK3R1 and GRB2. Interacts with CLEC5A. Forms an CLEC5A/TYROBP/HCST trimolecular complex depending almost solely on TYROBP. Interacts with CD300H. In terms of processing, phosphorylated; PIK3R1 and GRB2 associate specifically with tyrosine-phosphorylated HCST. O-glycosylated.

Its subcellular location is the membrane. In terms of biological role, transmembrane adapter protein which associates with KLRK1 to form an activation receptor KLRK1-HCST in lymphoid and myeloid cells; this receptor plays a major role in triggering cytotoxicity against target cells expressing cell surface ligands such as MHC class I chain-related MICA and MICB, and UL16-binding proteins (ULBPs); these ligands are up-regulated by stress conditions and pathological state such as viral infection and tumor transformation. Functions as a docking site for PI3-kinase PIK3R1 and GRB2. Interaction of ULBPs with KLRK1-HCST triggers calcium mobilization and activation of the PIK3R1, MAP2K/ERK, and JAK2/STAT5 signaling pathways. Both PIK3R1 and GRB2 are required for full KLRK1-HCST-mediated activation and ultimate killing of target cells. In NK cells, KLRK1-HCST signaling directly induces cytotoxicity and enhances cytokine production initiated via DAP12/TYROBP-associated receptors. In T-cells, it provides primarily costimulation for TCR-induced signals. KLRK1-HCST receptor plays a role in immune surveillance against tumors and is required for cytolysis of tumors cells; indeed, melanoma cells that do not express KLRK1 ligands escape from immune surveillance mediated by NK cells. This Rattus norvegicus (Rat) protein is Hematopoietic cell signal transducer (Hcst).